The following is a 62-amino-acid chain: Alkaline proteinase (62 aa).

The region spanning 1–62 (GSTSYIYDTS…FAPGTSVLSS (62 aa)) is the Peptidase S8 domain. The active-site Charge relay system is the Asp-21.

The protein localises to the secreted. With respect to regulation, inhibited by phenylmethanesulfonyl fluoride (PMSF) and chymostatin (CST), but not by Bowman-Birk type trypsin-chymotrypsin inhibitor (BBI). Its function is as follows. Serine protease. May be involved in the invasion of grains and hydrolysis of grain proteins. The chain is Alkaline proteinase from Fusarium culmorum.